Consider the following 247-residue polypeptide: Cell division protein ZapD (247 aa).

This sequence belongs to the ZapD family. As to quaternary structure, interacts with FtsZ.

The protein localises to the cytoplasm. Cell division factor that enhances FtsZ-ring assembly. Directly interacts with FtsZ and promotes bundling of FtsZ protofilaments, with a reduction in FtsZ GTPase activity. The protein is Cell division protein ZapD of Klebsiella pneumoniae (strain 342).